Reading from the N-terminus, the 241-residue chain is Uridylate kinase (241 aa).

14 to 17 (KLSG) lines the ATP pocket. Glycine 56 is a binding site for UMP. Residues glycine 57 and arginine 61 each coordinate ATP. UMP-binding positions include aspartate 77 and 138 to 145 (TGNPFFTT). Threonine 165, tyrosine 171, and aspartate 174 together coordinate ATP.

Belongs to the UMP kinase family. Homohexamer.

Its subcellular location is the cytoplasm. It carries out the reaction UMP + ATP = UDP + ADP. It functions in the pathway pyrimidine metabolism; CTP biosynthesis via de novo pathway; UDP from UMP (UMPK route): step 1/1. Its activity is regulated as follows. Inhibited by UTP. In terms of biological role, catalyzes the reversible phosphorylation of UMP to UDP. In Psychrobacter arcticus (strain DSM 17307 / VKM B-2377 / 273-4), this protein is Uridylate kinase.